Here is a 550-residue protein sequence, read N- to C-terminus: Hydroxylamine reductase (550 aa).

The [2Fe-2S] cluster site is built by Cys-3, Cys-6, Cys-18, and Cys-25. Positions 249, 273, 317, 405, 433, 458, 492, and 494 each coordinate hybrid [4Fe-2O-2S] cluster. Cys-405 carries the post-translational modification Cysteine persulfide.

It belongs to the HCP family. [2Fe-2S] cluster is required as a cofactor. Hybrid [4Fe-2O-2S] cluster serves as cofactor.

It localises to the cytoplasm. The catalysed reaction is A + NH4(+) + H2O = hydroxylamine + AH2 + H(+). Functionally, catalyzes the reduction of hydroxylamine to form NH(3) and H(2)O. The protein is Hydroxylamine reductase of Escherichia coli O139:H28 (strain E24377A / ETEC).